Here is a 253-residue protein sequence, read N- to C-terminus: 5'-nucleotidase SurE (253 aa).

Aspartate 8, aspartate 9, serine 40, and asparagine 97 together coordinate a divalent metal cation.

It belongs to the SurE nucleotidase family. A divalent metal cation serves as cofactor.

The protein localises to the cytoplasm. The catalysed reaction is a ribonucleoside 5'-phosphate + H2O = a ribonucleoside + phosphate. In terms of biological role, nucleotidase that shows phosphatase activity on nucleoside 5'-monophosphates. The protein is 5'-nucleotidase SurE of Desulforamulus reducens (strain ATCC BAA-1160 / DSM 100696 / MI-1) (Desulfotomaculum reducens).